The primary structure comprises 101 residues: MRRYEVNIVLNPNLDQSQLALEKEIIQRALENYGARVEKVEELGLRRLAYPIAKDPQGYFLWYQVEMPEDRVNDLARELRIRDNVRRVMVVKSQEPFLANA.

This sequence belongs to the bacterial ribosomal protein bS6 family. As to quaternary structure, part of the 30S ribosomal subunit. Forms a tight heterodimer with protein bS18.

Located on the outer edge of the platform on the body of the 30S subunit. The polypeptide is Small ribosomal subunit protein bS6 (rpsF) (Thermus thermophilus (strain ATCC BAA-163 / DSM 7039 / HB27)).